A 410-amino-acid polypeptide reads, in one-letter code: UDP-N-acetylglucosamine--N-acetylmuramyl-(pentapeptide) pyrophosphoryl-undecaprenol N-acetylglucosamine transferase (410 aa).

Positions 1 to 34 are disordered; that stretch reads MKDTVSQPAGGRGATAPRPADAASPSCGSSPSAD. Low complexity predominate over residues 14 to 34; that stretch reads ATAPRPADAASPSCGSSPSAD. UDP-N-acetyl-alpha-D-glucosamine is bound by residues 45–47, N167, R204, S238, and Q334; that span reads TAG.

Belongs to the glycosyltransferase 28 family. MurG subfamily.

Its subcellular location is the cell membrane. It catalyses the reaction di-trans,octa-cis-undecaprenyl diphospho-N-acetyl-alpha-D-muramoyl-L-alanyl-D-glutamyl-meso-2,6-diaminopimeloyl-D-alanyl-D-alanine + UDP-N-acetyl-alpha-D-glucosamine = di-trans,octa-cis-undecaprenyl diphospho-[N-acetyl-alpha-D-glucosaminyl-(1-&gt;4)]-N-acetyl-alpha-D-muramoyl-L-alanyl-D-glutamyl-meso-2,6-diaminopimeloyl-D-alanyl-D-alanine + UDP + H(+). It functions in the pathway cell wall biogenesis; peptidoglycan biosynthesis. Functionally, cell wall formation. Catalyzes the transfer of a GlcNAc subunit on undecaprenyl-pyrophosphoryl-MurNAc-pentapeptide (lipid intermediate I) to form undecaprenyl-pyrophosphoryl-MurNAc-(pentapeptide)GlcNAc (lipid intermediate II). This Mycobacterium bovis (strain ATCC BAA-935 / AF2122/97) protein is UDP-N-acetylglucosamine--N-acetylmuramyl-(pentapeptide) pyrophosphoryl-undecaprenol N-acetylglucosamine transferase.